We begin with the raw amino-acid sequence, 402 residues long: Multidrug resistance protein MdtH (402 aa).

Residues 1-12 (MSRVSQARNLGK) are Cytoplasmic-facing. The chain crosses the membrane as a helical span at residues 13-33 (YFLLIDNMLVVLVFFVVFPLI). Topologically, residues 34–98 (SIRFVDQMGW…GFATMGIAHE (65 aa)) are periplasmic. A helical transmembrane segment spans residues 99–116 (PWLLWFSCFLSGLGGTLF). The Cytoplasmic segment spans residues 117 to 138 (DPPRSALVVKLIRPEQRGRFFS). A helical membrane pass occupies residues 139-159 (LLMMQDSAGAVIGALLGSWLL). The Periplasmic segment spans residues 160-164 (QYDFR). Residues 165 to 185 (LVCATGAILFILCALFNAWLL) traverse the membrane as a helical segment. Residues 186–213 (PAWKLSTVRTPVREGMRRVMSDKRFVTY) lie on the Cytoplasmic side of the membrane. Residues 214–234 (VLTLAGYYMLAVQVMLMLPIM) traverse the membrane as a helical segment. Over 235 to 243 (VNDIAGSPA) the chain is Periplasmic. Residues 244–264 (AVKWMYAIEACLSLTLLYPIA) form a helical membrane-spanning segment. The Cytoplasmic portion of the chain corresponds to 265–276 (RWSEKRFRLEHR). Residues 277–297 (LMAGLLVMSLSMIPIGMVGNL) form a helical membrane-spanning segment. Over 298–299 (QQ) the chain is Periplasmic. Residues 300-320 (LFTLICAFYIGSVIAEPARET) form a helical membrane-spanning segment. Residues 321 to 339 (LSASLADARARGSYMGFSR) are Cytoplasmic-facing. The helical transmembrane segment at 340 to 360 (LGLAIGGAIGYIGGGWLFDMG) threads the bilayer. The Periplasmic portion of the chain corresponds to 361-367 (KALTQPE). A helical transmembrane segment spans residues 368-388 (LPWMMLGIIGFITFLALGWQF). Residues 389–402 (SHKRTPRRMLEPGA) are Cytoplasmic-facing.

Belongs to the major facilitator superfamily. DHA1 family. MdtH (TC 2.A.1.2.21) subfamily.

It is found in the cell inner membrane. In Salmonella choleraesuis (strain SC-B67), this protein is Multidrug resistance protein MdtH.